The primary structure comprises 62 residues: Large ribosomal subunit protein bL28 (62 aa).

It belongs to the bacterial ribosomal protein bL28 family.

The chain is Large ribosomal subunit protein bL28 from Streptococcus equi subsp. equi (strain 4047).